A 467-amino-acid polypeptide reads, in one-letter code: Argininosuccinate lyase (467 aa).

The protein belongs to the lyase 1 family. Argininosuccinate lyase subfamily.

It is found in the cytoplasm. The catalysed reaction is 2-(N(omega)-L-arginino)succinate = fumarate + L-arginine. It functions in the pathway amino-acid biosynthesis; L-arginine biosynthesis; L-arginine from L-ornithine and carbamoyl phosphate: step 3/3. This chain is Argininosuccinate lyase, found in Campylobacter curvus (strain 525.92).